We begin with the raw amino-acid sequence, 194 residues long: MRQSSQVRQTTETKIKLSLQLDESTNVSIQTGIGFFDHMLTLFARHGRFGLQVEAEGDVFVDAHHTVEDVGIVLGNCLKEALQNKERINRYGSAYVPMDESLGFVAIDISGRSYCVFQGELTNPKLGDFDTELTEEFFRAVAHAANITLHARVLYGSNTHHKIEALFKAFGRALREAVEKNANITGVNSTKGML.

This sequence belongs to the imidazoleglycerol-phosphate dehydratase family.

The protein localises to the cytoplasm. It catalyses the reaction D-erythro-1-(imidazol-4-yl)glycerol 3-phosphate = 3-(imidazol-4-yl)-2-oxopropyl phosphate + H2O. Its pathway is amino-acid biosynthesis; L-histidine biosynthesis; L-histidine from 5-phospho-alpha-D-ribose 1-diphosphate: step 6/9. The protein is Imidazoleglycerol-phosphate dehydratase of Bacillus cereus (strain G9842).